Consider the following 1379-residue polypeptide: DNA-directed RNA polymerase subunit beta'' (1379 aa).

Zn(2+) is bound by residues Cys220, Cys293, Cys300, and Cys303.

This sequence belongs to the RNA polymerase beta' chain family. RpoC2 subfamily. In plastids the minimal PEP RNA polymerase catalytic core is composed of four subunits: alpha, beta, beta', and beta''. When a (nuclear-encoded) sigma factor is associated with the core the holoenzyme is formed, which can initiate transcription. Requires Zn(2+) as cofactor.

Its subcellular location is the plastid. It is found in the chloroplast. The enzyme catalyses RNA(n) + a ribonucleoside 5'-triphosphate = RNA(n+1) + diphosphate. DNA-dependent RNA polymerase catalyzes the transcription of DNA into RNA using the four ribonucleoside triphosphates as substrates. The protein is DNA-directed RNA polymerase subunit beta'' of Nasturtium officinale (Watercress).